Here is a 916-residue protein sequence, read N- to C-terminus: Probable dipeptidyl-aminopeptidase B (916 aa).

Disordered stretches follow at residues 1–35 and 67–86; these read MGRT…SGLS and DAEA…KLGS. The Cytoplasmic portion of the chain corresponds to 1–92; the sequence is MGRTGDLENA…KLGSGSRTRQ (92 aa). Positions 21–35 are enriched in low complexity; it reads TSGTSSRSSTDSGLS. A helical; Signal-anchor for type II membrane protein membrane pass occupies residues 93–113; that stretch reads IFWALVILCLGGWVLALVLFL. At 114–916 the chain is on the vacuolar side; it reads THGRASSQTA…VKRSVPAFAH (803 aa). 2 N-linked (GlcNAc...) asparagine glycosylation sites follow: asparagine 349 and asparagine 640. Serine 754 acts as the Charge relay system in catalysis. Asparagine 808 and asparagine 813 each carry an N-linked (GlcNAc...) asparagine glycan. Catalysis depends on charge relay system residues aspartate 831 and histidine 864.

This sequence belongs to the peptidase S9B family.

The protein resides in the vacuole membrane. The catalysed reaction is Release of an N-terminal dipeptide, Xaa-Yaa-|-Zaa-, from a polypeptide, preferentially when Yaa is Pro, provided Zaa is neither Pro nor hydroxyproline.. In terms of biological role, type IV dipeptidyl-peptidase which removes N-terminal dipeptides sequentially from polypeptides having unsubstituted N-termini provided that the penultimate residue is proline. This Aspergillus flavus (strain ATCC 200026 / FGSC A1120 / IAM 13836 / NRRL 3357 / JCM 12722 / SRRC 167) protein is Probable dipeptidyl-aminopeptidase B (dapB).